The following is a 207-amino-acid chain: Dephospho-CoA kinase (207 aa).

The DPCK domain occupies 5 to 203 (AVGLTGGIAC…ARYRALASVF (199 aa)). Residue 13 to 18 (ACGKSL) participates in ATP binding.

It belongs to the CoaE family.

The protein localises to the cytoplasm. It catalyses the reaction 3'-dephospho-CoA + ATP = ADP + CoA + H(+). The protein operates within cofactor biosynthesis; coenzyme A biosynthesis; CoA from (R)-pantothenate: step 5/5. In terms of biological role, catalyzes the phosphorylation of the 3'-hydroxyl group of dephosphocoenzyme A to form coenzyme A. The polypeptide is Dephospho-CoA kinase (Xylella fastidiosa (strain 9a5c)).